We begin with the raw amino-acid sequence, 494 residues long: Glutamyl-tRNA(Gln) amidotransferase subunit A (494 aa).

Catalysis depends on charge relay system residues Lys-72 and Ser-147. Ser-171 acts as the Acyl-ester intermediate in catalysis.

Belongs to the amidase family. GatA subfamily. As to quaternary structure, heterotrimer of A, B and C subunits.

The enzyme catalyses L-glutamyl-tRNA(Gln) + L-glutamine + ATP + H2O = L-glutaminyl-tRNA(Gln) + L-glutamate + ADP + phosphate + H(+). Functionally, allows the formation of correctly charged Gln-tRNA(Gln) through the transamidation of misacylated Glu-tRNA(Gln) in organisms which lack glutaminyl-tRNA synthetase. The reaction takes place in the presence of glutamine and ATP through an activated gamma-phospho-Glu-tRNA(Gln). This is Glutamyl-tRNA(Gln) amidotransferase subunit A from Methylacidiphilum infernorum (isolate V4) (Methylokorus infernorum (strain V4)).